We begin with the raw amino-acid sequence, 429 residues long: Glutamate-1-semialdehyde 2,1-aminomutase (429 aa).

Lys-267 carries the post-translational modification N6-(pyridoxal phosphate)lysine.

It belongs to the class-III pyridoxal-phosphate-dependent aminotransferase family. HemL subfamily. Homodimer. Pyridoxal 5'-phosphate is required as a cofactor.

The protein resides in the cytoplasm. The catalysed reaction is (S)-4-amino-5-oxopentanoate = 5-aminolevulinate. The protein operates within porphyrin-containing compound metabolism; protoporphyrin-IX biosynthesis; 5-aminolevulinate from L-glutamyl-tRNA(Glu): step 2/2. This is Glutamate-1-semialdehyde 2,1-aminomutase from Xanthomonas campestris pv. campestris (strain 8004).